A 175-amino-acid chain; its full sequence is Probable DNA replication complex GINS protein PSF2 (175 aa).

Belongs to the GINS2/PSF2 family. In terms of assembly, component of the GINS complex which is a heterotetramer of SLD5, PSF1, PSF2 and PSF3.

It is found in the nucleus. In terms of biological role, the GINS complex plays an essential role in the initiation of DNA replication. This chain is Probable DNA replication complex GINS protein PSF2, found in Encephalitozoon cuniculi (strain GB-M1) (Microsporidian parasite).